Consider the following 174-residue polypeptide: Peptidyl-prolyl cis-trans isomerase-like 1 (174 aa).

The PPIase cyclophilin-type domain occupies 5–159; sequence SPTYVTFDTS…EEIKIHRARL (155 aa).

The protein belongs to the cyclophilin-type PPIase family. PPIL1 subfamily.

It catalyses the reaction [protein]-peptidylproline (omega=180) = [protein]-peptidylproline (omega=0). PPIases accelerate the folding of proteins. It catalyzes the cis-trans isomerization of proline imidic peptide bonds in oligopeptides. In Cryptococcus neoformans var. neoformans serotype D (strain B-3501A) (Filobasidiella neoformans), this protein is Peptidyl-prolyl cis-trans isomerase-like 1 (CYP1).